Here is a 354-residue protein sequence, read N- to C-terminus: L-lactate dehydrogenase (354 aa).

NAD(+) contacts are provided by residues aspartate 73–lysine 78 and arginine 120. Substrate contacts are provided by arginine 127, asparagine 159, and arginine 190. Asparagine 159 lines the NAD(+) pocket. Histidine 214 (proton acceptor) is an active-site residue. Threonine 269 is a binding site for substrate. The disordered stretch occupies residues histidine 302 to glutamate 332.

It belongs to the LDH/MDH superfamily. LDH family. As to quaternary structure, homotetramer.

The catalysed reaction is (S)-lactate + NAD(+) = pyruvate + NADH + H(+). The protein operates within fermentation; pyruvate fermentation to lactate; (S)-lactate from pyruvate: step 1/1. This Zea mays (Maize) protein is L-lactate dehydrogenase.